A 397-amino-acid chain; its full sequence is RNA binding protein fox-1 homolog 1 (397 aa).

Residues 1 to 121 (MNCEREQLRG…NKSQPKRLHV (121 aa)) form a disordered region. The segment covering 70-87 (QTHSEQSPADTSAQTVSG) has biased composition (polar residues). Low complexity predominate over residues 88–99 (TATQTDDAAPTD). Over residues 100–113 (GQPQTQPSENTENK) the composition is skewed to polar residues. One can recognise an RRM domain in the interval 117–193 (KRLHVSNIPF…RKIEVNNATA (77 aa)). Arg-317 bears the Asymmetric dimethylarginine mark. Arg-388 is subject to Omega-N-methylarginine.

As to quaternary structure, binds to the C-terminus of ATXN2. Predominantly expressed in muscle and brain.

It is found in the nucleus. Its subcellular location is the cytoplasm. In terms of biological role, RNA-binding protein that regulates alternative splicing events by binding to 5'-UGCAUGU-3' elements. Regulates alternative splicing of tissue-specific exons and of differentially spliced exons during erythropoiesis. The chain is RNA binding protein fox-1 homolog 1 (RBFOX1) from Homo sapiens (Human).